The primary structure comprises 430 residues: Glutamate-1-semialdehyde 2,1-aminomutase (430 aa).

Lysine 267 carries the N6-(pyridoxal phosphate)lysine modification.

This sequence belongs to the class-III pyridoxal-phosphate-dependent aminotransferase family. HemL subfamily. In terms of assembly, homodimer. Pyridoxal 5'-phosphate serves as cofactor.

Its subcellular location is the cytoplasm. It catalyses the reaction (S)-4-amino-5-oxopentanoate = 5-aminolevulinate. The protein operates within porphyrin-containing compound metabolism; protoporphyrin-IX biosynthesis; 5-aminolevulinate from L-glutamyl-tRNA(Glu): step 2/2. In Anaeromyxobacter dehalogenans (strain 2CP-1 / ATCC BAA-258), this protein is Glutamate-1-semialdehyde 2,1-aminomutase.